Here is a 184-residue protein sequence, read N- to C-terminus: Trichothecene 15-O-acetyltransferase SAT16 (184 aa).

Residue histidine 154 participates in substrate binding.

This sequence belongs to the trichothecene O-acetyltransferase family.

It participates in mycotoxin biosynthesis. Trichothecene 15-O-acetyltransferase; part of the satratoxin SC2 cluster involved in the biosynthesis of satratoxins, trichothecene mycotoxins that are associated with human food poisonings. Satratoxins are suggested to be made by products of multiple gene clusters (SC1, SC2 and SC3) that encode 21 proteins in all, including polyketide synthases, acetyltransferases, and other enzymes expected to modify the trichothecene skeleton. SC1 encodes 10 proteins, SAT1 to SAT10. The largest are SAT8, which encodes a putative polyketide synthase (PKS) with a conventional non-reducing architecture, and SAT10, a putative protein containing four ankyrin repeats and thus may be involved in protein scaffolding. The putative short-chain reductase SAT3 may assist the PKS in some capacity. SAT6 contains a secretory lipase domain and acts probably as a trichothecene esterase. SAT5 encodes a putative acetyltransferase, and so, with SAT6, may affect endogenous protection from toxicity. The probable transcription factor SAT9 may regulate the expression of the SC1 cluster. SC2 encodes proteins SAT11 to SAT16, the largest of which encodes the putative reducing PKS SAT13. SAT11 is a cytochrome P450 monooxygenase, while SAT14 and SAT16 are probable acetyltransferases. The SC2 cluster may be regulated by the transcription factor SAT15. SC3 is a small cluster that encodes 5 proteins, SAT17 to SAT21. SAT21 is a putative MFS-type transporter which may have a role in exporting secondary metabolites. The four other proteins putatively encoded in SC3 include the taurine hydroxylase-like protein SAT17, the O-methyltransferase SAT18, the acetyltransferase SAT19, and the Cys6-type zinc finger SAT20, the latter being probably involved in regulation of SC3 expression. The protein is Trichothecene 15-O-acetyltransferase SAT16 of Stachybotrys chartarum (strain CBS 109288 / IBT 7711) (Toxic black mold).